The primary structure comprises 247 residues: 1-(5-phosphoribosyl)-5-[(5-phosphoribosylamino)methylideneamino] imidazole-4-carboxamide isomerase (247 aa).

Residue aspartate 8 is the Proton acceptor of the active site. The active-site Proton donor is aspartate 131.

Belongs to the HisA/HisF family.

Its subcellular location is the cytoplasm. It carries out the reaction 1-(5-phospho-beta-D-ribosyl)-5-[(5-phospho-beta-D-ribosylamino)methylideneamino]imidazole-4-carboxamide = 5-[(5-phospho-1-deoxy-D-ribulos-1-ylimino)methylamino]-1-(5-phospho-beta-D-ribosyl)imidazole-4-carboxamide. It participates in amino-acid biosynthesis; L-histidine biosynthesis; L-histidine from 5-phospho-alpha-D-ribose 1-diphosphate: step 4/9. The chain is 1-(5-phosphoribosyl)-5-[(5-phosphoribosylamino)methylideneamino] imidazole-4-carboxamide isomerase from Ralstonia pickettii (strain 12J).